The sequence spans 855 residues: Alanine--tRNA ligase (855 aa).

4 residues coordinate Zn(2+): His-555, His-559, Cys-657, and His-661.

It belongs to the class-II aminoacyl-tRNA synthetase family. Zn(2+) serves as cofactor.

It is found in the cytoplasm. It catalyses the reaction tRNA(Ala) + L-alanine + ATP = L-alanyl-tRNA(Ala) + AMP + diphosphate. In terms of biological role, catalyzes the attachment of alanine to tRNA(Ala) in a two-step reaction: alanine is first activated by ATP to form Ala-AMP and then transferred to the acceptor end of tRNA(Ala). Also edits incorrectly charged Ser-tRNA(Ala) and Gly-tRNA(Ala) via its editing domain. The polypeptide is Alanine--tRNA ligase (Wolinella succinogenes (strain ATCC 29543 / DSM 1740 / CCUG 13145 / JCM 31913 / LMG 7466 / NCTC 11488 / FDC 602W) (Vibrio succinogenes)).